A 483-amino-acid chain; its full sequence is Glycogen synthase (483 aa).

Residue K18 coordinates ADP-alpha-D-glucose.

Belongs to the glycosyltransferase 1 family. Bacterial/plant glycogen synthase subfamily.

The enzyme catalyses [(1-&gt;4)-alpha-D-glucosyl](n) + ADP-alpha-D-glucose = [(1-&gt;4)-alpha-D-glucosyl](n+1) + ADP + H(+). Its pathway is glycan biosynthesis; glycogen biosynthesis. Synthesizes alpha-1,4-glucan chains using ADP-glucose. This Rhodopseudomonas palustris (strain TIE-1) protein is Glycogen synthase.